We begin with the raw amino-acid sequence, 340 residues long: MTDHALLLVNLGSPASTQVADVRSYLNQFLMDPYVIDIPWPLRRLLVSLILIKRPEQSAHAYASIWWDEGSPLVVLSKRLQQAMKKEWSHGPVELAMRYGEPSIETVLTRLSEQGFKKVTLAPLYPQFADSTVTTVIEEAKRVVRAKSLKMQFSVLQPFYDQPEYVSALVESVRPHLEQPYDHLLLSFHGLPERHLHKRDPTGKHCLKDDCCMTAPAQVVATCYRAQCLQSAAAFAKRMGIPDGKWSVSFQSRLGRAKWIEPYTEARLDELAAQGVKKLLVMCPAFVADCIETLEEIGDRGAEQFKEAGGEELILVPCLNDDPNWAKELNRLCERAPLML.

Positions 189 and 292 each coordinate Fe cation.

It belongs to the ferrochelatase family.

It localises to the cytoplasm. The enzyme catalyses heme b + 2 H(+) = protoporphyrin IX + Fe(2+). The protein operates within porphyrin-containing compound metabolism; protoheme biosynthesis; protoheme from protoporphyrin-IX: step 1/1. Catalyzes the ferrous insertion into protoporphyrin IX. The chain is Ferrochelatase from Pseudomonas syringae pv. tomato (strain ATCC BAA-871 / DC3000).